The primary structure comprises 239 residues: Ribonuclease PH (239 aa).

Phosphate is bound by residues Arg86 and 124–126 (GTR).

The protein belongs to the RNase PH family. As to quaternary structure, homohexameric ring arranged as a trimer of dimers.

It carries out the reaction tRNA(n+1) + phosphate = tRNA(n) + a ribonucleoside 5'-diphosphate. Its function is as follows. Phosphorolytic 3'-5' exoribonuclease that plays an important role in tRNA 3'-end maturation. Removes nucleotide residues following the 3'-CCA terminus of tRNAs; can also add nucleotides to the ends of RNA molecules by using nucleoside diphosphates as substrates, but this may not be physiologically important. Probably plays a role in initiation of 16S rRNA degradation (leading to ribosome degradation) during starvation. The chain is Ribonuclease PH from Azoarcus sp. (strain BH72).